We begin with the raw amino-acid sequence, 1010 residues long: Collagen, type I, alpha 1b (1010 aa).

Pro residues predominate over residues 1–24 (SSGPPQPGPMGPMGPRGPPGPPGS). The interval 1–969 (SSGPPQPGPM…PDGTQKSPAR (969 aa)) is disordered. Residues 25-48 (SGPQGFTGPPGEPGEPGASGAMGS) are compositionally biased toward low complexity. Residues 58–72 (NGDDGEPGKPGRPGE) show a composition bias toward basic and acidic residues. Positions 73–82 (RGAAGPQGAR) are enriched in low complexity. The segment covering 145–159 (GGPPGPTGPAGPPGF) has biased composition (pro residues). Gly residues-rich tracts occupy residues 160-179 (PGGA…GNEG) and 203-212 (GTDGGPGAKG). 2 stretches are compositionally biased toward low complexity: residues 213 to 268 (SPGA…PGPA) and 300 to 310 (ERGAPGARGFP). Over residues 311-323 (GADGGAGGKGAPG) the composition is skewed to gly residues. Low complexity-rich tracts occupy residues 324–343 (ERGA…PGSK) and 405–448 (PAGA…APGE). Gly residues-rich tracts occupy residues 468–477 (GAPGLGGPTG), 486–495 (GAPGGLGAPG), and 519–528 (GGKGGDGAPG). Low complexity-rich tracts occupy residues 559-568 (VAGPTGPRGA) and 581-596 (AGFA…PGAK). Composition is skewed to gly residues over residues 609–618 (GAPGPGGPVG) and 633–642 (GARGGAGPPG). Composition is skewed to low complexity over residues 643–662 (ATGF…AGAA), 679–701 (ETGA…SGEK), and 796–805 (APGAVGPSGK). Over residues 834-847 (KGDRGEAGEAGDRG) the composition is skewed to basic and acidic residues. Residues 872-900 (PAGASGPAGPRGPAGSNGAAGKDGMNGLP) are compositionally biased toward low complexity. Residues 918–933 (AGPPGPPGPAGPPGPP) show a composition bias toward pro residues. One can recognise a Fibrillar collagen NC1 domain in the interval 982-1010 (RLPLLDLAPMDVGAPDQEFGVEVGPVCFL).

The protein belongs to the fibrillar collagen family.

The protein resides in the secreted. The protein localises to the extracellular space. It localises to the extracellular matrix. The protein is Collagen, type I, alpha 1b of Epinephelus marginatus (Dusky grouper).